We begin with the raw amino-acid sequence, 500 residues long: Glycerol kinase (500 aa).

Residue Thr13 participates in ADP binding. ATP-binding residues include Thr13, Thr14, and Ser15. Thr13 serves as a coordination point for sn-glycerol 3-phosphate. Residue Arg17 coordinates ADP. Sn-glycerol 3-phosphate is bound by residues Arg83, Glu84, and Tyr135. Glycerol is bound by residues Arg83, Glu84, and Tyr135. Position 231 is a phosphohistidine; by HPr (His231). Residue Asp245 coordinates sn-glycerol 3-phosphate. Glycerol-binding residues include Asp245 and Gln246. ADP contacts are provided by Thr267 and Gly310. Residues Thr267, Gly310, Gln314, and Gly411 each contribute to the ATP site. The ADP site is built by Gly411 and Asn415.

This sequence belongs to the FGGY kinase family. As to quaternary structure, homotetramer and homodimer (in equilibrium). The phosphoenolpyruvate-dependent sugar phosphotransferase system (PTS), including enzyme I, and histidine-containing protein (HPr) are required for the phosphorylation, which leads to the activation of the enzyme.

The enzyme catalyses glycerol + ATP = sn-glycerol 3-phosphate + ADP + H(+). It participates in polyol metabolism; glycerol degradation via glycerol kinase pathway; sn-glycerol 3-phosphate from glycerol: step 1/1. Its activity is regulated as follows. Activated by phosphorylation and inhibited by fructose 1,6-bisphosphate (FBP). Its function is as follows. Key enzyme in the regulation of glycerol uptake and metabolism. Catalyzes the phosphorylation of glycerol to yield sn-glycerol 3-phosphate. This chain is Glycerol kinase, found in Oceanobacillus iheyensis (strain DSM 14371 / CIP 107618 / JCM 11309 / KCTC 3954 / HTE831).